A 141-amino-acid chain; its full sequence is Hemoglobin subunit alpha (141 aa).

In terms of domain architecture, Globin spans 1 to 141 (VLSAKDKTNI…VSTVLTSKYR (141 aa)). Ser3 carries the post-translational modification Phosphoserine. Residue Lys7 is modified to N6-succinyllysine. Phosphothreonine is present on Thr8. N6-acetyllysine; alternate is present on Lys16. Residue Lys16 is modified to N6-succinyllysine; alternate. Phosphotyrosine is present on Tyr24. Lys40 carries the post-translational modification N6-succinyllysine. The residue at position 49 (Ser49) is a Phosphoserine. O2 is bound at residue His58. Heme b is bound at residue His87. The residue at position 102 (Ser102) is a Phosphoserine. At Thr108 the chain carries Phosphothreonine. Phosphoserine occurs at positions 124 and 131. Residues Thr134 and Thr137 each carry the phosphothreonine modification. The residue at position 138 (Ser138) is a Phosphoserine.

Belongs to the globin family. In terms of assembly, heterotetramer of two alpha chains and two beta chains. In terms of tissue distribution, red blood cells.

In terms of biological role, involved in oxygen transport from the lung to the various peripheral tissues. Hemopressin acts as an antagonist peptide of the cannabinoid receptor CNR1. Hemopressin-binding efficiently blocks cannabinoid receptor CNR1 and subsequent signaling. The chain is Hemoglobin subunit alpha (HBA) from Mesocricetus auratus (Golden hamster).